A 269-amino-acid polypeptide reads, in one-letter code: Type II methyltransferase M2.LlaDCHI (269 aa).

It belongs to the N(4)/N(6)-methyltransferase family.

It carries out the reaction a 2'-deoxyadenosine in DNA + S-adenosyl-L-methionine = an N(6)-methyl-2'-deoxyadenosine in DNA + S-adenosyl-L-homocysteine + H(+). A beta subtype methylase, recognizes the double-stranded sequence 5'-GATC-3', methylates A-2 on both strands, and protects the DNA from cleavage by the LlaDCHI endonuclease. This chain is Type II methyltransferase M2.LlaDCHI, found in Lactococcus lactis subsp. cremoris (Streptococcus cremoris).